Consider the following 545-residue polypeptide: CTP synthase (545 aa).

The amidoligase domain stretch occupies residues 1 to 266; that stretch reads MTTKYIFVTG…DEICVKRFGL (266 aa). Residue S14 coordinates CTP. S14 contributes to the UTP binding site. ATP-binding positions include 15–20 and D72; that span reads SLGKGI. 2 residues coordinate Mg(2+): D72 and E140. Residues 147 to 149, 187 to 192, and K223 each bind CTP; these read DIE and KTKPTQ. UTP is bound by residues 187 to 192 and K223; that span reads KTKPTQ. Position 239–241 (239–241) interacts with ATP; sequence RDV. In terms of domain architecture, Glutamine amidotransferase type-1 spans 291-542; the sequence is IIGMVGKYTE…IKSAIDHQQG (252 aa). G352 contributes to the L-glutamine binding site. Catalysis depends on C379, which acts as the Nucleophile; for glutamine hydrolysis. Residues 380 to 383, E403, and R470 each bind L-glutamine; that span reads LGMQ. Active-site residues include H515 and E517.

This sequence belongs to the CTP synthase family. Homotetramer.

It carries out the reaction UTP + L-glutamine + ATP + H2O = CTP + L-glutamate + ADP + phosphate + 2 H(+). The enzyme catalyses L-glutamine + H2O = L-glutamate + NH4(+). The catalysed reaction is UTP + NH4(+) + ATP = CTP + ADP + phosphate + 2 H(+). Its pathway is pyrimidine metabolism; CTP biosynthesis via de novo pathway; CTP from UDP: step 2/2. Allosterically activated by GTP, when glutamine is the substrate; GTP has no effect on the reaction when ammonia is the substrate. The allosteric effector GTP functions by stabilizing the protein conformation that binds the tetrahedral intermediate(s) formed during glutamine hydrolysis. Inhibited by the product CTP, via allosteric rather than competitive inhibition. In terms of biological role, catalyzes the ATP-dependent amination of UTP to CTP with either L-glutamine or ammonia as the source of nitrogen. Regulates intracellular CTP levels through interactions with the four ribonucleotide triphosphates. This is CTP synthase from Psychromonas ingrahamii (strain DSM 17664 / CCUG 51855 / 37).